Here is a 665-residue protein sequence, read N- to C-terminus: Dual specificity protein phosphatase 16 (665 aa).

The Rhodanese domain maps to 22–137; sequence GTEKVLLIDS…FSRCFPGLCE (116 aa). (Microbial infection) N6-acetyllysine; by EIS is present on lysine 55. A Tyrosine-protein phosphatase domain is found at 158-300; sequence GPTRILPNLY…LLDYEKKIKN (143 aa). The active-site Phosphocysteine intermediate is cysteine 244. A disordered region spans residues 321–368; sequence EPVPAVSEGGQKSETPLSPPCADSATSEAAGQRPVHPASVPSVPSVQP. Residues 354-368 show a composition bias toward low complexity; the sequence is PVHPASVPSVPSVQP. The residue at position 446 (serine 446) is a Phosphoserine; by MAPK1. Polar residues-rich tracts occupy residues 449-458 and 487-499; these read QELSEQTPET and VRTS…QRSL. Disordered stretches follow at residues 449–505 and 597–665; these read QELS…PLHR and VRRR…IEVS. A Phosphoserine modification is found at serine 501. Over residues 602-622 the composition is skewed to basic and acidic residues; sequence KPSDRADSRRSWHEESPFEKQ.

Belongs to the protein-tyrosine phosphatase family. Non-receptor class dual specificity subfamily. Interacts with ARRB2. In terms of processing, phosphorylated at Ser-446 by MAPK1/ERK2, which prevents its degradation, and thereby stabilizes it and blocks JNK MAPK activity. Post-translationally, (Microbial infection) Acetylated at Lys-55 by the M.tuberculosis Eis protein; this leads to the inhibition of JNK-dependent autophagy, phagosome maturation, and ROS (reactive oxygen species) generation for enhanced intracellular survival of M.tuberculosis.

The protein localises to the cytoplasm. It is found in the nucleus. The protein resides in the cytoplasmic vesicle. The catalysed reaction is O-phospho-L-tyrosyl-[protein] + H2O = L-tyrosyl-[protein] + phosphate. It catalyses the reaction O-phospho-L-seryl-[protein] + H2O = L-seryl-[protein] + phosphate. It carries out the reaction O-phospho-L-threonyl-[protein] + H2O = L-threonyl-[protein] + phosphate. Its function is as follows. Dual specificity protein phosphatase involved in the inactivation of MAP kinases. Dephosphorylates MAPK10 bound to ARRB2. This chain is Dual specificity protein phosphatase 16 (DUSP16), found in Homo sapiens (Human).